A 476-amino-acid chain; its full sequence is Bifunctional protein GlmU (476 aa).

The pyrophosphorylase stretch occupies residues 1–235 (MTALDIIIMA…ALQVAGVNSP (235 aa)). UDP-N-acetyl-alpha-D-glucosamine-binding positions include Lys23, Gln81, 86-87 (GT), 108-110 (SGD), Gly145, Glu160, and Asn233. Asp110 is a Mg(2+) binding site. Asn233 contacts Mg(2+). Residues 236-256 (AQLAELERAHQRAQAAALMEQ) form a linker region. The N-acetyltransferase stretch occupies residues 257 to 476 (GVRLADPARF…WKRPAKQAKG (220 aa)). UDP-N-acetyl-alpha-D-glucosamine is bound by residues Arg351 and Lys369. Catalysis depends on His381, which acts as the Proton acceptor. UDP-N-acetyl-alpha-D-glucosamine-binding residues include Tyr384 and Asn395. Acetyl-CoA is bound by residues Ala398, 404–405 (NY), Ser423, Gly441, and Arg458.

This sequence in the N-terminal section; belongs to the N-acetylglucosamine-1-phosphate uridyltransferase family. It in the C-terminal section; belongs to the transferase hexapeptide repeat family. As to quaternary structure, homotrimer. Mg(2+) is required as a cofactor.

Its subcellular location is the cytoplasm. It catalyses the reaction alpha-D-glucosamine 1-phosphate + acetyl-CoA = N-acetyl-alpha-D-glucosamine 1-phosphate + CoA + H(+). The catalysed reaction is N-acetyl-alpha-D-glucosamine 1-phosphate + UTP + H(+) = UDP-N-acetyl-alpha-D-glucosamine + diphosphate. The protein operates within nucleotide-sugar biosynthesis; UDP-N-acetyl-alpha-D-glucosamine biosynthesis; N-acetyl-alpha-D-glucosamine 1-phosphate from alpha-D-glucosamine 6-phosphate (route II): step 2/2. It functions in the pathway nucleotide-sugar biosynthesis; UDP-N-acetyl-alpha-D-glucosamine biosynthesis; UDP-N-acetyl-alpha-D-glucosamine from N-acetyl-alpha-D-glucosamine 1-phosphate: step 1/1. It participates in bacterial outer membrane biogenesis; LPS lipid A biosynthesis. Its function is as follows. Catalyzes the last two sequential reactions in the de novo biosynthetic pathway for UDP-N-acetylglucosamine (UDP-GlcNAc). The C-terminal domain catalyzes the transfer of acetyl group from acetyl coenzyme A to glucosamine-1-phosphate (GlcN-1-P) to produce N-acetylglucosamine-1-phosphate (GlcNAc-1-P), which is converted into UDP-GlcNAc by the transfer of uridine 5-monophosphate (from uridine 5-triphosphate), a reaction catalyzed by the N-terminal domain. The protein is Bifunctional protein GlmU of Acidovorax ebreus (strain TPSY) (Diaphorobacter sp. (strain TPSY)).